The primary structure comprises 140 residues: Cytochrome c-type biogenesis protein CcmE (140 aa).

Topologically, residues 1–7 (MKRKHKR) are cytoplasmic. The helical; Signal-anchor for type II membrane protein transmembrane segment at 8–28 (LLFVLASFCAAGCALLFILSE) threads the bilayer. Topologically, residues 29–140 (LRESVSFFYT…TIPKALPEPK (112 aa)) are periplasmic. The heme site is built by His121 and Tyr125.

It belongs to the CcmE/CycJ family.

The protein resides in the cell inner membrane. Its function is as follows. Heme chaperone required for the biogenesis of c-type cytochromes. Transiently binds heme delivered by CcmC and transfers the heme to apo-cytochromes in a process facilitated by CcmF and CcmH. The polypeptide is Cytochrome c-type biogenesis protein CcmE (Anaplasma marginale (strain Florida)).